We begin with the raw amino-acid sequence, 235 residues long: Aspartate/glutamate leucyltransferase (235 aa).

The protein belongs to the R-transferase family. Bpt subfamily.

Its subcellular location is the cytoplasm. The catalysed reaction is N-terminal L-glutamyl-[protein] + L-leucyl-tRNA(Leu) = N-terminal L-leucyl-L-glutamyl-[protein] + tRNA(Leu) + H(+). It catalyses the reaction N-terminal L-aspartyl-[protein] + L-leucyl-tRNA(Leu) = N-terminal L-leucyl-L-aspartyl-[protein] + tRNA(Leu) + H(+). In terms of biological role, functions in the N-end rule pathway of protein degradation where it conjugates Leu from its aminoacyl-tRNA to the N-termini of proteins containing an N-terminal aspartate or glutamate. The protein is Aspartate/glutamate leucyltransferase of Pseudomonas paraeruginosa (strain DSM 24068 / PA7) (Pseudomonas aeruginosa (strain PA7)).